Consider the following 256-residue polypeptide: UPF0644 protein PB2B4.06 (256 aa).

Residues 34 to 56 form a helical membrane-spanning segment; that stretch reads GVVYAGVSGTCAAAGYMFGNFVM.

It belongs to the UPF0644 family.

Its subcellular location is the mitochondrion membrane. The chain is UPF0644 protein PB2B4.06 from Schizosaccharomyces pombe (strain 972 / ATCC 24843) (Fission yeast).